A 188-amino-acid polypeptide reads, in one-letter code: MKKIGVLAIQGAVDEHIQMIESAGALAFKVKHSSDLDGLDGLVLPGGESTTMRKIMKRYDLMEPIRAFASEGKAIFGTCAGLVLLSKEIEGGEESLGLIEATAIRNGFGRQKESFEAELNVEAFGEPAFEAIFIRAPYLIEPSNEVAVLATVENRIVAAKQANILVTAFHPELTNDNRWMNYFLEKMV.

47–49 (GES) lines the L-glutamine pocket. Cysteine 79 acts as the Nucleophile in catalysis. Residues arginine 105 and 134 to 135 (IR) contribute to the L-glutamine site. Catalysis depends on charge relay system residues histidine 170 and glutamate 172.

It belongs to the glutaminase PdxT/SNO family. In terms of assembly, in the presence of PdxS, forms a dodecamer of heterodimers. Only shows activity in the heterodimer.

It carries out the reaction aldehydo-D-ribose 5-phosphate + D-glyceraldehyde 3-phosphate + L-glutamine = pyridoxal 5'-phosphate + L-glutamate + phosphate + 3 H2O + H(+). The catalysed reaction is L-glutamine + H2O = L-glutamate + NH4(+). It functions in the pathway cofactor biosynthesis; pyridoxal 5'-phosphate biosynthesis. Catalyzes the hydrolysis of glutamine to glutamate and ammonia as part of the biosynthesis of pyridoxal 5'-phosphate. The resulting ammonia molecule is channeled to the active site of PdxS. The sequence is that of Pyridoxal 5'-phosphate synthase subunit PdxT from Listeria monocytogenes serotype 4b (strain F2365).